The sequence spans 683 residues: Multidrug resistance protein MdtO (683 aa).

9 helical membrane-spanning segments follow: residues 43-63 (VILI…AVLF), 75-95 (FVAI…FLIY), 100-120 (GEPL…MFLM), 125-145 (LGLV…FPAM), 158-178 (WCIV…VLWF), 402-422 (FGGA…VMPW), 426-446 (IVEL…IATS), 457-477 (MVVT…YDLV), and 483-503 (ALGI…VWPE).

This sequence belongs to the MdtO family. As to quaternary structure, could be part of a tripartite efflux system composed of MdtN, MdtO and MdtP.

The protein localises to the cell inner membrane. Could be involved in resistance to puromycin, acriflavine and tetraphenylarsonium chloride. In Escherichia coli O6:H1 (strain CFT073 / ATCC 700928 / UPEC), this protein is Multidrug resistance protein MdtO (mdtO).